The following is a 624-amino-acid chain: Probable potassium transport system protein Kup 2 (624 aa).

The next 12 helical transmembrane spans lie at 14–34, 51–71, 97–117, 133–153, 163–183, 211–231, 245–265, 283–303, 335–355, 364–384, 393–413, and 416–436; these read LSFA…LYAF, ILSL…LVIV, GGWL…DGML, LSPN…FFLF, IGVY…ILGF, SALF…ALFA, WFAV…AFVL, FLPV…QAII, VYLP…VVIF, AYGI…GIIA, FKIL…AGNI, and LLTG…VMYT.

Belongs to the HAK/KUP transporter (TC 2.A.72) family.

It localises to the cell inner membrane. It catalyses the reaction K(+)(in) + H(+)(in) = K(+)(out) + H(+)(out). Functionally, transport of potassium into the cell. Likely operates as a K(+):H(+) symporter. The sequence is that of Probable potassium transport system protein Kup 2 from Legionella pneumophila (strain Lens).